We begin with the raw amino-acid sequence, 131 residues long: Large ribosomal subunit protein bL12 (131 aa).

This sequence belongs to the bacterial ribosomal protein bL12 family. As to quaternary structure, homodimer. Part of the ribosomal stalk of the 50S ribosomal subunit. Forms a multimeric L10(L12)X complex, where L10 forms an elongated spine to which 2 to 4 L12 dimers bind in a sequential fashion. Binds GTP-bound translation factors.

Functionally, forms part of the ribosomal stalk which helps the ribosome interact with GTP-bound translation factors. Is thus essential for accurate translation. This is Large ribosomal subunit protein bL12 from Prochlorococcus marinus (strain MIT 9215).